We begin with the raw amino-acid sequence, 221 residues long: Vesicle-associated membrane protein 714 (221 aa).

Ala2 carries the N-acetylalanine modification. Residues 2-190 (AIVYAVVARG…RRALWMKNAK (189 aa)) lie on the Cytoplasmic side of the membrane. The region spanning 7–112 (VVARGTVVLA…AMNDEFSRVL (106 aa)) is the Longin domain. The v-SNARE coiled-coil homology domain occupies 127-187 (TLNRVRGEVS…KRLRRALWMK (61 aa)). A helical; Anchor for type IV membrane protein transmembrane segment spans residues 191–211 (LLVLLTCLIVFLLYIIIASFC). The Vesicular portion of the chain corresponds to 212–221 (GGITLPSCRS).

This sequence belongs to the synaptobrevin family. In terms of tissue distribution, highly expressed in leaves, stems and roots. Detected in flowers.

Its subcellular location is the golgi apparatus membrane. Involved in the targeting and/or fusion of transport vesicles to their target membrane. The polypeptide is Vesicle-associated membrane protein 714 (Arabidopsis thaliana (Mouse-ear cress)).